A 138-amino-acid chain; its full sequence is Small ribosomal subunit protein uS11c (138 aa).

The segment at 1–21 (MAKSIPKIGSRKTGRIGSRKH) is disordered. A compositionally biased stretch (basic residues) spans 9–21 (GSRKTGRIGSRKH).

It belongs to the universal ribosomal protein uS11 family. Part of the 30S ribosomal subunit.

Its subcellular location is the plastid. The protein resides in the chloroplast. The chain is Small ribosomal subunit protein uS11c from Pisum sativum (Garden pea).